A 561-amino-acid chain; its full sequence is uncharacterized protein (561 aa).

Positions 187–217 (DDEELSEEEILNRIDKLQIELEQVIGKQKNI) form a coiled coil.

This is an uncharacterized protein from Dictyostelium discoideum (Social amoeba).